The sequence spans 147 residues: Deoxyuridine 5'-triphosphate nucleotidohydrolase (147 aa).

Residues 67–69 (RSG), N80, and 84–86 (TID) each bind substrate.

It belongs to the dUTPase family. Mg(2+) serves as cofactor.

The enzyme catalyses dUTP + H2O = dUMP + diphosphate + H(+). Its pathway is pyrimidine metabolism; dUMP biosynthesis; dUMP from dCTP (dUTP route): step 2/2. This enzyme is involved in nucleotide metabolism: it produces dUMP, the immediate precursor of thymidine nucleotides and it decreases the intracellular concentration of dUTP so that uracil cannot be incorporated into DNA. This Anaplasma marginale (strain St. Maries) protein is Deoxyuridine 5'-triphosphate nucleotidohydrolase.